Reading from the N-terminus, the 392-residue chain is Formate-dependent phosphoribosylglycinamide formyltransferase (392 aa).

Residues 22–23 and Glu82 each bind N(1)-(5-phospho-beta-D-ribosyl)glycinamide; that span reads EL. ATP-binding positions include Arg114, Lys155, 160 to 165, 195 to 198, and Glu203; these read SSGKGQ and EGVV. One can recognise an ATP-grasp domain in the interval 119 to 308; the sequence is RLAAEELGLP…EFALHVRAFL (190 aa). The Mg(2+) site is built by Glu267 and Glu279. Residues Asp286, Lys355, and 362 to 363 each bind N(1)-(5-phospho-beta-D-ribosyl)glycinamide; that span reads RR.

Belongs to the PurK/PurT family. As to quaternary structure, homodimer.

It carries out the reaction N(1)-(5-phospho-beta-D-ribosyl)glycinamide + formate + ATP = N(2)-formyl-N(1)-(5-phospho-beta-D-ribosyl)glycinamide + ADP + phosphate + H(+). Its pathway is purine metabolism; IMP biosynthesis via de novo pathway; N(2)-formyl-N(1)-(5-phospho-D-ribosyl)glycinamide from N(1)-(5-phospho-D-ribosyl)glycinamide (formate route): step 1/1. Functionally, involved in the de novo purine biosynthesis. Catalyzes the transfer of formate to 5-phospho-ribosyl-glycinamide (GAR), producing 5-phospho-ribosyl-N-formylglycinamide (FGAR). Formate is provided by PurU via hydrolysis of 10-formyl-tetrahydrofolate. In Salmonella paratyphi B (strain ATCC BAA-1250 / SPB7), this protein is Formate-dependent phosphoribosylglycinamide formyltransferase.